A 129-amino-acid polypeptide reads, in one-letter code: Virion-associated protein (129 aa).

Coiled-coil stretches lie at residues Met1–Leu31 and Ile38–Asp59. The segment at Pro122–Tyr129 is capsid binding.

Belongs to the caulimovirus ORF III family. Homotetramer, through coiled-coil domain. Homotrimer when interacts with icosehadral capsid. Interacts with capsid protein, and with Movement protein.

The protein localises to the virion. It is found in the host cell junction. It localises to the host plasmodesma. In terms of biological role, plays a role in virus cell-to-cell and plant-to-plant transmission. Interacts with virion icosahedral capsid and movement protein, thereby facilitating virion cell-to-cell transmission through plasmodesmata opened by viral movement protein. Also interacts with aphid transmission factor, attaching the virion to aphid stylet when the animal feeds on an virus infected plant. Aphid saliva may later detach the virion, inducing release of infectious particles when the animal feeds on a new plant. In Cauliflower mosaic virus (strain D/H) (CaMV), this protein is Virion-associated protein.